Consider the following 533-residue polypeptide: GMP synthase [glutamine-hydrolyzing] (533 aa).

One can recognise a Glutamine amidotransferase type-1 domain in the interval 12 to 206; that stretch reads TILVLDFGSQ…AVGICGAEQK (195 aa). Catalysis depends on cysteine 88, which acts as the Nucleophile. Active-site residues include histidine 180 and glutamate 182. The 202-residue stretch at 207–408 folds into the GMPS ATP-PPase domain; sequence WTMAEFIGQE…LGISPELVGR (202 aa). An ATP-binding site is contributed by 235–241; the sequence is SGGVDST. 4 residues coordinate XMP: arginine 308, aspartate 470, lysine 525, and glutamate 531.

In terms of assembly, homodimer. It depends on Mg(2+) as a cofactor.

It is found in the cytoplasm. Its subcellular location is the cytosol. The enzyme catalyses XMP + L-glutamine + ATP + H2O = GMP + L-glutamate + AMP + diphosphate + 2 H(+). The protein operates within purine metabolism; GMP biosynthesis; GMP from XMP (L-Gln route): step 1/1. Functionally, catalyzes the conversion of xanthine monophosphate (XMP) to GMP in the presence of glutamine and ATP through an adenyl-XMP intermediate. This is GMP synthase [glutamine-hydrolyzing] (gua1) from Emericella nidulans (strain FGSC A4 / ATCC 38163 / CBS 112.46 / NRRL 194 / M139) (Aspergillus nidulans).